A 510-amino-acid polypeptide reads, in one-letter code: uncharacterized protein (510 aa).

Positions 1 to 19 (MLILLILYFLFLQLHIFDS) are cleaved as a signal peptide. Residues 28–48 (IYIHYAICKFIFLLEIYKLIA) traverse the membrane as a helical segment.

The protein localises to the host membrane. This is an uncharacterized protein from Sulfolobus islandicus rod-shaped virus 1 (SIRV-1).